The sequence spans 73 residues: UPF0154 protein MG335.1 homolog (73 aa).

Residues 6-26 (LALGLGIPLSLLVGVIIGYFI) form a helical membrane-spanning segment.

It belongs to the UPF0154 family.

The protein localises to the membrane. In Mycoplasma pneumoniae (strain ATCC 29342 / M129 / Subtype 1) (Mycoplasmoides pneumoniae), this protein is UPF0154 protein MG335.1 homolog.